We begin with the raw amino-acid sequence, 204 residues long: Auxin-binding protein 4 (204 aa).

The N-terminal stretch at methionine 1–serine 41 is a signal peptide. An intrachain disulfide couples cysteine 43 to cysteine 196. Positions 98, 100, and 104 each coordinate Zn(2+). An N-linked (GlcNAc...) asparagine glycan is attached at asparagine 136. A Zn(2+)-binding site is contributed by histidine 147. The Prevents secretion from ER motif lies at lysine 201 to leucine 204.

Homodimer.

The protein localises to the endoplasmic reticulum lumen. This is probably a receptor for the plant hormone auxin. The polypeptide is Auxin-binding protein 4 (ABP4) (Zea mays (Maize)).